Consider the following 234-residue polypeptide: Glutathione S-transferase 1 (234 aa).

The 88-residue stretch at 3 to 90 (LPIIKVHWLD…YVLQHFDHSH (88 aa)) folds into the GST N-terminal domain. A GST C-terminal domain is found at 96 to 234 (DADIADQINY…EKARALGSNF (139 aa)).

This sequence belongs to the GST superfamily. Homodimer.

It is found in the endoplasmic reticulum membrane. The enzyme catalyses RX + glutathione = an S-substituted glutathione + a halide anion + H(+). This Saccharomyces cerevisiae (strain ATCC 204508 / S288c) (Baker's yeast) protein is Glutathione S-transferase 1 (GTT1).